Here is a 77-residue protein sequence, read N- to C-terminus: Translation initiation factor IF-1, chloroplastic (77 aa).

Positions 1-71 constitute an S1-like domain; it reads MKRQKWIHEG…TRGRIIYRLR (71 aa).

Belongs to the IF-1 family. In terms of assembly, component of the 30S ribosomal translation pre-initiation complex which assembles on the 30S ribosome in the order IF-2 and IF-3, IF-1 and N-formylmethionyl-tRNA(fMet); mRNA recruitment can occur at any time during PIC assembly.

It localises to the plastid. It is found in the chloroplast. One of the essential components for the initiation of protein synthesis. Stabilizes the binding of IF-2 and IF-3 on the 30S subunit to which N-formylmethionyl-tRNA(fMet) subsequently binds. Helps modulate mRNA selection, yielding the 30S pre-initiation complex (PIC). Upon addition of the 50S ribosomal subunit IF-1, IF-2 and IF-3 are released leaving the mature 70S translation initiation complex. This chain is Translation initiation factor IF-1, chloroplastic, found in Leucophyllum frutescens (Texas ranger).